The following is a 478-amino-acid chain: BUB3-interacting and GLEBS motif-containing protein ZNF207 (478 aa).

The interval 1 to 92 (MGRKKKKQLK…EGIPEKDMDE (92 aa)) is microtubule-binding region. C2H2-type zinc fingers lie at residues 11 to 34 (PWCWYCNRDFDDEKILIQHQKAKH) and 35 to 58 (FKCHICHKKLYTGPGLAIHCMQVH). Residues 99–111 (QKTQESQKKKQQD) are compositionally biased toward basic and acidic residues. 4 disordered regions span residues 99-157 (QKTQ…PGMP), 238-276 (APTATVPAPQPPVTKPLFPSAGQMGTPVTSSSTASSNSE), 300-362 (VGTD…ATSK), and 384-478 (RNLP…GGRY). Acidic residues predominate over residues 112-121 (DSDEYDDDDS). Residues 127–136 (FQPQPVQPQQ) are compositionally biased toward polar residues. Pro residues predominate over residues 142–157 (MAQPGLPPVPGAPGMP). 3 stretches are compositionally biased toward low complexity: residues 267-276 (SSSTASSNSE), 310-362 (TPAT…ATSK), and 433-446 (QGMPGYLPGAMPPY). The tract at residues 359-391 (ATSKLIHPDEDISLEERRAQLPKYQRNLPRPGQ) is GLEBS. Residues 447-467 (GQGPPMVPPYQGGPPRPPMGM) show a composition bias toward pro residues.

As to quaternary structure, interacts (via GLEBS region) with BUB3. As to expression, ubiquitous.

It localises to the nucleus. The protein localises to the chromosome. It is found in the centromere. The protein resides in the kinetochore. Its subcellular location is the cytoplasm. It localises to the cytoskeleton. The protein localises to the spindle. In terms of biological role, kinetochore- and microtubule-binding protein that plays a key role in spindle assembly. ZNF207/BuGZ is mainly composed of disordered low-complexity regions and undergoes phase transition or coacervation to form temperature-dependent liquid droplets. Coacervation promotes microtubule bundling and concentrates tubulin, promoting microtubule polymerization and assembly of spindle and spindle matrix by concentrating its building blocks. Also acts as a regulator of mitotic chromosome alignment by mediating the stability and kinetochore loading of BUB3. Mechanisms by which BUB3 is protected are unclear: according to a first report, ZNF207/BuGZ may act by blocking ubiquitination and proteasomal degradation of BUB3. According to another report, the stabilization is independent of the proteasome. In Homo sapiens (Human), this protein is BUB3-interacting and GLEBS motif-containing protein ZNF207.